The chain runs to 429 residues: Glutamate-1-semialdehyde 2,1-aminomutase (429 aa).

Lys267 is modified (N6-(pyridoxal phosphate)lysine).

This sequence belongs to the class-III pyridoxal-phosphate-dependent aminotransferase family. HemL subfamily. Homodimer. Pyridoxal 5'-phosphate serves as cofactor.

The protein resides in the cytoplasm. It carries out the reaction (S)-4-amino-5-oxopentanoate = 5-aminolevulinate. It participates in porphyrin-containing compound metabolism; protoporphyrin-IX biosynthesis; 5-aminolevulinate from L-glutamyl-tRNA(Glu): step 2/2. The chain is Glutamate-1-semialdehyde 2,1-aminomutase from Xanthomonas euvesicatoria pv. vesicatoria (strain 85-10) (Xanthomonas campestris pv. vesicatoria).